Consider the following 328-residue polypeptide: GMP reductase (328 aa).

Catalysis depends on C176, which acts as the Thioimidate intermediate. 205–228 contacts NADP(+); sequence IIADGGIRTHGDIAKSIRFGASMI.

The protein belongs to the IMPDH/GMPR family. GuaC type 2 subfamily.

It carries out the reaction IMP + NH4(+) + NADP(+) = GMP + NADPH + 2 H(+). In terms of biological role, catalyzes the irreversible NADPH-dependent deamination of GMP to IMP. It functions in the conversion of nucleobase, nucleoside and nucleotide derivatives of G to A nucleotides, and in maintaining the intracellular balance of A and G nucleotides. In Streptococcus pneumoniae serotype 2 (strain D39 / NCTC 7466), this protein is GMP reductase.